We begin with the raw amino-acid sequence, 185 residues long: Elongation factor P (185 aa).

This sequence belongs to the elongation factor P family.

The protein resides in the cytoplasm. Its pathway is protein biosynthesis; polypeptide chain elongation. Its function is as follows. Involved in peptide bond synthesis. Stimulates efficient translation and peptide-bond synthesis on native or reconstituted 70S ribosomes in vitro. Probably functions indirectly by altering the affinity of the ribosome for aminoacyl-tRNA, thus increasing their reactivity as acceptors for peptidyl transferase. The polypeptide is Elongation factor P (Desulforudis audaxviator (strain MP104C)).